We begin with the raw amino-acid sequence, 443 residues long: Threonine/serine transporter TdcC (443 aa).

11 consecutive transmembrane segments (helical) span residues Thr-22–Ile-42, Ala-44–Phe-64, Gly-97–Val-117, Phe-140–Met-160, Val-163–Ile-183, Ile-207–Ile-227, Met-261–Ala-281, Phe-311–Phe-331, Ile-366–Leu-386, Ile-389–Ile-409, and Asp-423–Phe-443.

It belongs to the amino acid/polyamine transporter 2 family. SdaC/TdcC subfamily.

Its subcellular location is the cell inner membrane. The enzyme catalyses L-threonine(in) + H(+)(in) = L-threonine(out) + H(+)(out). It carries out the reaction L-serine(in) + H(+)(in) = L-serine(out) + H(+)(out). Involved in the import of threonine and serine into the cell, with the concomitant import of a proton (symport system). In Shigella boydii serotype 18 (strain CDC 3083-94 / BS512), this protein is Threonine/serine transporter TdcC.